The primary structure comprises 471 residues: Regulator of microtubule dynamics protein 3 (471 aa).

Residues 1 to 9 (MSSLGTLGG) lie on the Mitochondrial intermembrane side of the membrane. The helical transmembrane segment at 10-32 (ARAGLGLLLGTAAGLGFLCALYS) threads the bilayer. The Cytoplasmic segment spans residues 33–471 (QRWKRTQRRG…LEELEVILGE (439 aa)). A disordered region spans residues 39–70 (QRRGQSQSQSNSLDYTQTSEPGRQVRPLRAAP). Residues 41–50 (RGQSQSQSNS) show a composition bias toward low complexity. A phosphoserine mark is found at Ser-44, Ser-46, Ser-50, and Ser-57. The stretch at 90 to 123 (LDRLEFVLTSLVALRREVEELRSSLQGLAGQIVG) forms a coiled coil. Positions 156–162 (VYFTAAS) match the FFAT motif. Thr-159 bears the Phosphothreonine mark. The interval 169–206 (AESEGGYTTANAESDYERDSERESDGDGEDEVSCETVK) is disordered. Phosphoserine is present on residues Ser-182, Ser-192, Ser-212, and Ser-233. Residues 183 to 193 (DYERDSERESD) are compositionally biased toward basic and acidic residues.

This sequence belongs to the RMDN family. In terms of assembly, interacts with PTPN2. Interacts with microtubules. Interacts with VAPB. Interacts (via FFAT motif) with MOSPD2 (via MSP domain). Interacts (via phosphorylated FFAT motif) with MOSPD2, VAPA and VAPB. Post-translationally, phosphorylation at Thr-160 of the FFAT motif activates interaction with MOSPD2, VAPA and VAPB.

It is found in the mitochondrion outer membrane. It localises to the cytoplasm. The protein resides in the nucleus. The protein localises to the cytoskeleton. Its subcellular location is the spindle. It is found in the spindle pole. Its function is as follows. Involved in cellular calcium homeostasis regulation. May participate in differentiation and apoptosis of keratinocytes. Overexpression induces apoptosis. The chain is Regulator of microtubule dynamics protein 3 from Bos taurus (Bovine).